Here is an 864-residue protein sequence, read N- to C-terminus: Leucine--tRNA ligase (864 aa).

A 'HIGH' region motif is present at residues 50-60 (PYPSGKIHMGH). A 'KMSKS' region motif is present at residues 622–626 (KMSKS). Lys-625 contacts ATP.

The protein belongs to the class-I aminoacyl-tRNA synthetase family.

The protein localises to the cytoplasm. It catalyses the reaction tRNA(Leu) + L-leucine + ATP = L-leucyl-tRNA(Leu) + AMP + diphosphate. The sequence is that of Leucine--tRNA ligase from Acidiphilium cryptum (strain JF-5).